The primary structure comprises 339 residues: Probable geranylgeranyl transferase type-2 subunit beta (339 aa).

PFTB repeat units follow at residues 24–65, 72–113, 120–161, 168–209, 216–257, and 264–306; these read IDKH…YLLK, KNEV…IQYD, INSV…SLLK, CEKA…SILN, IDKL…SAID, and NDKL…SLMG. Geranylgeranyl diphosphate contacts are provided by residues 194–196 and 236–248; these read HAG and RPEK…YSWW. Zn(2+) contacts are provided by Asp242, Cys244, and His294.

This sequence belongs to the protein prenyltransferase subunit beta family. Heterodimer of an alpha and a beta subunit. Requires Zn(2+) as cofactor.

The enzyme catalyses geranylgeranyl diphosphate + L-cysteinyl-[protein] = S-geranylgeranyl-L-cysteinyl-[protein] + diphosphate. Catalyzes the transfer of a geranyl-geranyl moiety from geranyl-geranyl pyrophosphate to both cysteines in Rab proteins with an -XXCC, -XCXC and -CCXX C-terminal. This Dictyostelium discoideum (Social amoeba) protein is Probable geranylgeranyl transferase type-2 subunit beta (rabggtb).